Consider the following 155-residue polypeptide: Interleukin-2 (155 aa).

A signal peptide spans 1-20; the sequence is MYKIQLLSCIALTLALVANG. Thr23 carries O-linked (GalNAc...) threonine glycosylation. Cys79 and Cys127 form a disulfide bridge.

Belongs to the IL-2 family.

The protein localises to the secreted. Cytokine produced by activated CD4-positive helper T-cells and to a lesser extend activated CD8-positive T-cells and natural killer (NK) cells that plays pivotal roles in the immune response and tolerance. Binds to a receptor complex composed of either the high-affinity trimeric IL-2R (IL2RA/CD25, IL2RB/CD122 and IL2RG/CD132) or the low-affinity dimeric IL-2R (IL2RB and IL2RG). Interaction with the receptor leads to oligomerization and conformation changes in the IL-2R subunits resulting in downstream signaling starting with phosphorylation of JAK1 and JAK3. In turn, JAK1 and JAK3 phosphorylate the receptor to form a docking site leading to the phosphorylation of several substrates including STAT5. This process leads to activation of several pathways including STAT, phosphoinositide-3-kinase/PI3K and mitogen-activated protein kinase/MAPK pathways. Functions as a T-cell growth factor and can increase NK-cell cytolytic activity as well. Promotes strong proliferation of activated B-cells and subsequently immunoglobulin production. Plays a pivotal role in regulating the adaptive immune system by controlling the survival and proliferation of regulatory T-cells, which are required for the maintenance of immune tolerance. Moreover, participates in the differentiation and homeostasis of effector T-cell subsets, including Th1, Th2, Th17 as well as memory CD8-positive T-cells. This is Interleukin-2 (IL2) from Bubalus bubalis (Domestic water buffalo).